A 101-amino-acid chain; its full sequence is Replication restart protein PriB (101 aa).

The region spanning 1-101 (MTTNSLVLSG…IHAENVELKT (101 aa)) is the SSB domain.

Belongs to the PriB family. In terms of assembly, homodimer. Interacts with PriA and DnaT. Component of the replication restart primosome. Primosome assembly occurs via a 'hand-off' mechanism. PriA binds to replication forks, subsequently PriB then DnaT bind; DnaT then displaces ssDNA to generate the helicase loading substrate.

In terms of biological role, involved in the restart of stalled replication forks, which reloads the replicative helicase on sites other than the origin of replication; the PriA-PriB pathway is the major replication restart pathway. During primosome assembly it facilitates complex formation between PriA and DnaT on DNA; stabilizes PriA on DNA. Stimulates the DNA unwinding activity of PriA helicase. In Shewanella putrefaciens (strain CN-32 / ATCC BAA-453), this protein is Replication restart protein PriB.